A 242-amino-acid chain; its full sequence is Small ribosomal subunit protein uS2 (242 aa).

This sequence belongs to the universal ribosomal protein uS2 family.

The protein is Small ribosomal subunit protein uS2 of Neisseria meningitidis serogroup C (strain 053442).